A 497-amino-acid chain; its full sequence is Solute carrier family 2, facilitated glucose transporter member 6 (497 aa).

At 1–36 (MQEPLLRTEGLDYDTFPEVPATPGERERAGALKNRR) the chain is on the cytoplasmic side. Residues 5–6 (LL) carry the Dileucine internalization motif motif. A helical membrane pass occupies residues 37–57 (VFLATFAAVLGNFSFGYALVY). At 58–80 (TSPVIPELKLSSDPALHLDKIQA) the chain is on the extracellular side. A helical transmembrane segment spans residues 81–101 (SWFGSVFTLGAAAGGLSAMLL). The Cytoplasmic segment spans residues 102 to 115 (NDLLGRKLSIMFSA). Residues 116–136 (VPSAIGYAIMAGARGLWMLLL) form a helical membrane-spanning segment. The Extracellular segment spans residues 137-138 (GR). The chain crosses the membrane as a helical span at residues 139-159 (MLTGFAGGLTAACIPVYVSEI). Residues 160–171 (APPDVRGALGAT) are Cytoplasmic-facing. The chain crosses the membrane as a helical span at residues 172–192 (PQLMAVFGSLSLYALGLLLPW). Q173 contacts a D-hexose. A topological domain (extracellular) is located at residue R193. A helical transmembrane segment spans residues 194 to 214 (WLAVAGEGPVLIMILLLSFMP). Residues 215–273 (NSPRFLLSKSRDEEALQALTWLRADSEVHWEFEQIQDNVRRQSSRVSWAEAREPRVYRP) are Cytoplasmic-facing. Residues 274–294 (VLIAVLMRFLQQLTGITPILV) traverse the membrane as a helical segment. 284 to 285 (QQ) provides a ligand contact to a D-hexose. Over 295-312 (YLQTIFDNTSVVLPSQQD) the chain is Extracellular. N-linked (GlcNAc...) asparagine glycosylation occurs at N302. Residues 313-333 (AAIVGAVRLLSVLIAAVTMDL) form a helical membrane-spanning segment. The Cytoplasmic portion of the chain corresponds to 334–337 (AGRK). Residues 338-358 (VLLYVSASVMFAANLTLGLYV) traverse the membrane as a helical segment. At 359–385 (QFVPRPLTPNSTVEIVTLGDTAFNYLT) the chain is on the extracellular side. An N-linked (GlcNAc...) asparagine glycan is attached at N368. A helical membrane pass occupies residues 386 to 406 (LIPLLATMLFIMGYAMGWGPI). Residues 407–425 (TWLLMSEVLPLRARGVASG) are Cytoplasmic-facing. W408 is an a D-hexose binding site. A helical membrane pass occupies residues 426–446 (LCVLVSWLTAFVLTNYFLLAV). Position 447 (N447) is a topological domain, extracellular. A helical transmembrane segment spans residues 448-468 (AFGLQVPFFFFSAICLLSLLF). The Cytoplasmic portion of the chain corresponds to 469-497 (TGCCVPETRGRSLEQIEAFFHTRRMSFRP).

The protein belongs to the major facilitator superfamily. Sugar transporter (TC 2.A.1.1) family. Mainly expressed in brain and spleen. Also expressed in lung, heart, muscle, liver, kidney, fat, whole blood, testes, ovaries and uterus.

It is found in the lysosome membrane. Its function is as follows. Probable sugar transporter that acts as a regulator of glycolysis in macrophages. Does not transport glucose. This Mus musculus (Mouse) protein is Solute carrier family 2, facilitated glucose transporter member 6.